A 265-amino-acid polypeptide reads, in one-letter code: 5'-nucleotidase SurE (265 aa).

Residues aspartate 8, aspartate 9, serine 39, and asparagine 96 each coordinate a divalent metal cation.

Belongs to the SurE nucleotidase family. It depends on a divalent metal cation as a cofactor.

It is found in the cytoplasm. It catalyses the reaction a ribonucleoside 5'-phosphate + H2O = a ribonucleoside + phosphate. Nucleotidase that shows phosphatase activity on nucleoside 5'-monophosphates. The chain is 5'-nucleotidase SurE from Rubrobacter xylanophilus (strain DSM 9941 / JCM 11954 / NBRC 16129 / PRD-1).